A 434-amino-acid polypeptide reads, in one-letter code: UDP-N-acetylmuramate--L-alanine ligase (434 aa).

An ATP-binding site is contributed by 108-114; the sequence is GSHGKTT.

It belongs to the MurCDEF family.

Its subcellular location is the cytoplasm. It carries out the reaction UDP-N-acetyl-alpha-D-muramate + L-alanine + ATP = UDP-N-acetyl-alpha-D-muramoyl-L-alanine + ADP + phosphate + H(+). The protein operates within cell wall biogenesis; peptidoglycan biosynthesis. Cell wall formation. This chain is UDP-N-acetylmuramate--L-alanine ligase, found in Geobacillus kaustophilus (strain HTA426).